A 510-amino-acid chain; its full sequence is ATP synthase subunit alpha (510 aa).

169 to 176 (GDRQTGKT) is an ATP binding site.

This sequence belongs to the ATPase alpha/beta chains family. As to quaternary structure, F-type ATPases have 2 components, CF(1) - the catalytic core - and CF(0) - the membrane proton channel. CF(1) has five subunits: alpha(3), beta(3), gamma(1), delta(1), epsilon(1). CF(0) has three main subunits: a(1), b(2) and c(9-12). The alpha and beta chains form an alternating ring which encloses part of the gamma chain. CF(1) is attached to CF(0) by a central stalk formed by the gamma and epsilon chains, while a peripheral stalk is formed by the delta and b chains.

Its subcellular location is the cell inner membrane. The catalysed reaction is ATP + H2O + 4 H(+)(in) = ADP + phosphate + 5 H(+)(out). Its function is as follows. Produces ATP from ADP in the presence of a proton gradient across the membrane. The alpha chain is a regulatory subunit. The protein is ATP synthase subunit alpha of Methylobacterium radiotolerans (strain ATCC 27329 / DSM 1819 / JCM 2831 / NBRC 15690 / NCIMB 10815 / 0-1).